A 245-amino-acid polypeptide reads, in one-letter code: uncharacterized protein (245 aa).

The next 6 helical transmembrane spans lie at 38–58 (IYPA…AIFI), 68–88 (TIEL…QGYF), 100–120 (IWSL…LILA), 129–149 (VLFI…FVSA), 194–214 (VNNI…FLMN), and 217–237 (IAFI…LIIH).

This sequence belongs to the acyltransferase 3 family.

The protein resides in the cell membrane. This is an uncharacterized protein from Haemophilus influenzae (strain ATCC 51907 / DSM 11121 / KW20 / Rd).